A 167-amino-acid chain; its full sequence is Schlafen-like protein (167 aa).

It belongs to the Schlafen family. Subgroup poxviridae B3 subfamily.

This Bos taurus (Bovine) protein is Schlafen-like protein.